Consider the following 201-residue polypeptide: Recombination protein RecR (201 aa).

The C4-type zinc finger occupies 57-72 (CKLCQIYTEQPLCNIC). Residues 80–175 (TLLCVVESPA…KCSRIAHGVP (96 aa)) enclose the Toprim domain.

It belongs to the RecR family.

May play a role in DNA repair. It seems to be involved in an RecBC-independent recombinational process of DNA repair. It may act with RecF and RecO. The protein is Recombination protein RecR of Coxiella burnetii (strain RSA 493 / Nine Mile phase I).